A 139-amino-acid chain; its full sequence is MGTIRLMHAKLHRVRVSEANVDYVGSITIDRELIERVGILPLEEVDVVNLSNGKRFSTYVFPGHTGEICPNGGAALLCQPGDILIIYAYEQRPRQEVLEKGHFAKVLVADAENRCQQFFEQSLIPRGDGRGVEFSSQEC.

Ser-26 functions as the Schiff-base intermediate with substrate; via pyruvic acid in the catalytic mechanism. Ser-26 carries the post-translational modification Pyruvic acid (Ser). Thr-58 serves as a coordination point for substrate. Tyr-59 acts as the Proton donor in catalysis. 72 to 74 (GGA) serves as a coordination point for substrate.

It belongs to the PanD family. In terms of assembly, heterooctamer of four alpha and four beta subunits. Requires pyruvate as cofactor. In terms of processing, is synthesized initially as an inactive proenzyme, which is activated by self-cleavage at a specific serine bond to produce a beta-subunit with a hydroxyl group at its C-terminus and an alpha-subunit with a pyruvoyl group at its N-terminus.

Its subcellular location is the cytoplasm. The catalysed reaction is L-aspartate + H(+) = beta-alanine + CO2. The protein operates within cofactor biosynthesis; (R)-pantothenate biosynthesis; beta-alanine from L-aspartate: step 1/1. Catalyzes the pyruvoyl-dependent decarboxylation of aspartate to produce beta-alanine. The protein is Aspartate 1-decarboxylase of Microcystis aeruginosa (strain NIES-843 / IAM M-2473).